The sequence spans 650 residues: Acetyl-coenzyme A synthetase (650 aa).

CoA is bound by residues 191–194 (RGGR), Thr-311, and Asn-335. ATP contacts are provided by residues 387 to 389 (GEP), 411 to 416 (DTWWQT), Asp-500, and Arg-515. Ser-523 lines the CoA pocket. ATP is bound at residue Arg-526. Residues Val-537, His-539, and Val-542 each coordinate Mg(2+). Arg-584 serves as a coordination point for CoA. At Lys-609 the chain carries N6-acetyllysine.

It belongs to the ATP-dependent AMP-binding enzyme family. Mg(2+) serves as cofactor. Acetylated. Deacetylation by the SIR2-homolog deacetylase activates the enzyme.

It catalyses the reaction acetate + ATP + CoA = acetyl-CoA + AMP + diphosphate. Functionally, catalyzes the conversion of acetate into acetyl-CoA (AcCoA), an essential intermediate at the junction of anabolic and catabolic pathways. AcsA undergoes a two-step reaction. In the first half reaction, AcsA combines acetate with ATP to form acetyl-adenylate (AcAMP) intermediate. In the second half reaction, it can then transfer the acetyl group from AcAMP to the sulfhydryl group of CoA, forming the product AcCoA. The sequence is that of Acetyl-coenzyme A synthetase from Shewanella baltica (strain OS195).